Reading from the N-terminus, the 538-residue chain is MEIKEISVPQQGVVADYMNGKKEIQSCFDYMLTEDAFKQRLHDLREREFFRQDLVAHLLEYNTKLQAGESTLQNVKALGDENTYVVIAGQQAGLLTGPLYTIHKVISILQLAKEKEESLGVKVVPVFWIAGEDHDMDEINHTFVAKNKKMKKTIFYDRNPKKASASESELSVEDCRNWIEEIFKTYPETNFTKDVLKFVDDALKKSNTYVDFFAHLITKIFANSGLILVDSHHPELRKLEIPFFKRIISKYKEVQEGLRNQQEVIKELGYKPIIETKSHAVHIFMEIDNERVLLEDQQGKFVGKDGAHSFSYEELIEEMERNPARFSNNVVTRPLMQEYVFPTLAFIGGPGELAYWSELQQVFHTVGFQMPPVVPRLTITYVERDIATDLFDLQLRESDPFLNDVDKLRENWLSNQIEEPIDDHFEKAKKEIADIHTSLQRFVKKIEPGLGAFAGKNELKINEQIELLERMLKRNVEKKYEVQLNKFRRIQFALRPLGAPQERVWNVCYYLNQFGLDFVDRVMENSFSWDGKHHVIKL.

Positions 248–268 form a coiled coil; the sequence is ISKYKEVQEGLRNQQEVIKEL.

Belongs to the BshC family.

Functionally, involved in bacillithiol (BSH) biosynthesis. May catalyze the last step of the pathway, the addition of cysteine to glucosamine malate (GlcN-Mal) to generate BSH. The sequence is that of Putative cysteine ligase BshC from Bacillus cereus (strain B4264).